Reading from the N-terminus, the 231-residue chain is Large ribosomal subunit protein uL1 (231 aa).

Belongs to the universal ribosomal protein uL1 family. In terms of assembly, part of the 50S ribosomal subunit.

In terms of biological role, binds directly to 23S rRNA. The L1 stalk is quite mobile in the ribosome, and is involved in E site tRNA release. Protein L1 is also a translational repressor protein, it controls the translation of the L11 operon by binding to its mRNA. The chain is Large ribosomal subunit protein uL1 from Kosmotoga olearia (strain ATCC BAA-1733 / DSM 21960 / TBF 19.5.1).